The following is a 75-amino-acid chain: Large ribosomal subunit protein bL28 (75 aa).

Residues 1–21 (MARVCQVTGKRPMSGNKRSHA) form a disordered region.

It belongs to the bacterial ribosomal protein bL28 family.

This is Large ribosomal subunit protein bL28 from Blochmanniella pennsylvanica (strain BPEN).